The following is a 236-amino-acid chain: Probable transcriptional regulatory protein Suden_1389 (236 aa).

It belongs to the TACO1 family.

It is found in the cytoplasm. In Sulfurimonas denitrificans (strain ATCC 33889 / DSM 1251) (Thiomicrospira denitrificans (strain ATCC 33889 / DSM 1251)), this protein is Probable transcriptional regulatory protein Suden_1389.